The primary structure comprises 635 residues: Protein phosphatase PP2A regulatory subunit A (635 aa).

Positions 1–27 (MSGARSTTAGAVPSAATTSTTSTTSNS) are enriched in low complexity. The interval 1–33 (MSGARSTTAGAVPSAATTSTTSTTSNSKDSDSN) is disordered. HEAT repeat units follow at residues 34–72 (ESLY…GPER), 73–111 (TRNE…GGPQ), 112–150 (YATI…SQEQ), 151–189 (LFSD…KDDS), 190–228 (LRKN…TQNL), 229–273 (GLST…NAKG), 274–316 (DESH…SNQA), 317–356 (YIDE…DPSI), 357–395 (ILNK…NKDQ), 396–434 (VINN…GIEL), 435–473 (LSDS…GMQF), 474–512 (FDQQ…GSDW), 513–553 (CRDE…SLDV), 554–598 (VTEQ…YDAL), and 599–632 (IKNT…CQEL).

It belongs to the phosphatase 2A regulatory subunit A family. In terms of assembly, PP2A exists in several trimeric forms, all of which consist of a core composed of a catalytic subunit associated with a 65 kDa regulatory subunit (PR65) (subunit A). The core complex associates with a third, variable subunit (subunit B), which confers distinct properties to the holoenzyme.

Phosphatase 2A affects a variety of biological processes in the cell such as transcription, cell cycle progression and cellular morphogenesis, and provides an initial identification of critical substrates for this phosphatase. The regulatory subunit may direct the catalytic subunit to distinct, albeit overlapping, subsets of substrates. This chain is Protein phosphatase PP2A regulatory subunit A (TPD3), found in Saccharomyces cerevisiae (strain ATCC 204508 / S288c) (Baker's yeast).